A 138-amino-acid polypeptide reads, in one-letter code: ATP synthase epsilon chain (138 aa).

The protein belongs to the ATPase epsilon chain family. In terms of assembly, F-type ATPases have 2 components, CF(1) - the catalytic core - and CF(0) - the membrane proton channel. CF(1) has five subunits: alpha(3), beta(3), gamma(1), delta(1), epsilon(1). CF(0) has three main subunits: a, b and c.

It localises to the cell inner membrane. Produces ATP from ADP in the presence of a proton gradient across the membrane. This chain is ATP synthase epsilon chain, found in Psychrobacter sp. (strain PRwf-1).